Reading from the N-terminus, the 383-residue chain is ATP phosphoribosyltransferase regulatory subunit (383 aa).

Belongs to the class-II aminoacyl-tRNA synthetase family. HisZ subfamily. Heteromultimer composed of HisG and HisZ subunits.

The protein resides in the cytoplasm. It participates in amino-acid biosynthesis; L-histidine biosynthesis; L-histidine from 5-phospho-alpha-D-ribose 1-diphosphate: step 1/9. Functionally, required for the first step of histidine biosynthesis. May allow the feedback regulation of ATP phosphoribosyltransferase activity by histidine. The chain is ATP phosphoribosyltransferase regulatory subunit from Janthinobacterium sp. (strain Marseille) (Minibacterium massiliensis).